The primary structure comprises 95 residues: UPF0045 protein CPE1503 (95 aa).

The protein belongs to the UPF0045 family.

This chain is UPF0045 protein CPE1503, found in Clostridium perfringens (strain 13 / Type A).